The sequence spans 198 residues: TM2 domain-containing protein 2 (198 aa).

An N-terminal signal peptide occupies residues 1–27 (MRWPVPPLGYLLLGGQGLLLTFSLISS). Residues 28–128 (QNNTSPVTYP…FLRGNRPCIK (101 aa)) are Extracellular-facing. N-linked (GlcNAc...) asparagine glycans are attached at residues asparagine 29, asparagine 40, and asparagine 76. Residues 129–149 (YTGHYFITTLLYSFFLGCFGV) form a helical membrane-spanning segment. The 49-residue stretch at 131–179 (GHYFITTLLYSFFLGCFGVDRFCLGHTGTAVGKLLTWGGLGIWWFVDLI) folds into the TM2 domain. The Cytoplasmic portion of the chain corresponds to 150–166 (DRFCLGHTGTAVGKLLT). The helical transmembrane segment at 167–187 (WGGLGIWWFVDLILLITGGLM) threads the bilayer. The Extracellular segment spans residues 188-198 (PSDNSNWCTIY).

The protein belongs to the TM2 family.

It is found in the membrane. The protein is TM2 domain-containing protein 2 (tm2d2) of Xenopus laevis (African clawed frog).